A 280-amino-acid polypeptide reads, in one-letter code: MKKTALTIITIALGSLGAVYFLPSEPAAQKDIRATSQHDTSVDNTSAKAFLDYSLSTLGEKPLQTITQDVVREERALGELQLDEQLFALYLRYKQALADLDIEITGSDIISLETLHQAILDLQREYFSAQQIDLIFGEENQLRALALEKARLSEQGYSAEEQKQLWRDHLALQPEYVQESDANRRLMSELAQGEDAQTTYLKRVELVGEAGAQRLEVLDQNRAEFDRVFQHYLVQRSAILDDLGLSDEQKHKQITMLRETSFDAKQWRRIEALERIADGG.

The helical transmembrane segment at 5-22 (ALTIITIALGSLGAVYFL) threads the bilayer.

It belongs to the lipase chaperone family.

The protein localises to the cell inner membrane. Its function is as follows. May be involved in the folding of the extracellular lipase during its passage through the periplasm. In Vibrio vulnificus (strain CMCP6), this protein is Lipase chaperone (lifO).